We begin with the raw amino-acid sequence, 328 residues long: GTP cyclohydrolase MptA (328 aa).

It belongs to the GTP cyclohydrolase IV family. In terms of assembly, homodimer. The cofactor is Fe(2+).

The catalysed reaction is GTP + H2O = 7,8-dihydroneopterin 2',3'-cyclic phosphate + formate + diphosphate + H(+). The protein operates within cofactor biosynthesis; 5,6,7,8-tetrahydromethanopterin biosynthesis. Its function is as follows. Converts GTP to 7,8-dihydro-D-neopterin 2',3'-cyclic phosphate, the first intermediate in the biosynthesis of coenzyme methanopterin. The chain is GTP cyclohydrolase MptA from Methanospirillum hungatei JF-1 (strain ATCC 27890 / DSM 864 / NBRC 100397 / JF-1).